The following is a 302-amino-acid chain: Sulfate adenylyltransferase subunit 2 (302 aa).

This sequence belongs to the PAPS reductase family. CysD subfamily. In terms of assembly, heterodimer composed of CysD, the smaller subunit, and CysN.

The enzyme catalyses sulfate + ATP + H(+) = adenosine 5'-phosphosulfate + diphosphate. It functions in the pathway sulfur metabolism; hydrogen sulfide biosynthesis; sulfite from sulfate: step 1/3. Functionally, with CysN forms the ATP sulfurylase (ATPS) that catalyzes the adenylation of sulfate producing adenosine 5'-phosphosulfate (APS) and diphosphate, the first enzymatic step in sulfur assimilation pathway. APS synthesis involves the formation of a high-energy phosphoric-sulfuric acid anhydride bond driven by GTP hydrolysis by CysN coupled to ATP hydrolysis by CysD. In Pectobacterium carotovorum subsp. carotovorum (strain PC1), this protein is Sulfate adenylyltransferase subunit 2.